A 143-amino-acid chain; its full sequence is Large ribosomal subunit protein uL13 (143 aa).

The protein belongs to the universal ribosomal protein uL13 family. Part of the 50S ribosomal subunit.

Its function is as follows. This protein is one of the early assembly proteins of the 50S ribosomal subunit, although it is not seen to bind rRNA by itself. It is important during the early stages of 50S assembly. This is Large ribosomal subunit protein uL13 from Alkaliphilus oremlandii (strain OhILAs) (Clostridium oremlandii (strain OhILAs)).